A 445-amino-acid polypeptide reads, in one-letter code: 3-phosphoshikimate 1-carboxyvinyltransferase (445 aa).

The tract at residues 1-20 (MSTSAAPTPLESRASGPLSG) is disordered. 3-phosphoshikimate is bound by residues K28, S29, and R33. Residue K28 participates in phosphoenolpyruvate binding. 2 residues coordinate phosphoenolpyruvate: G101 and R129. S175, Q177, D328, and K355 together coordinate 3-phosphoshikimate. Q177 provides a ligand contact to phosphoenolpyruvate. D328 (proton acceptor) is an active-site residue. The phosphoenolpyruvate site is built by R359 and R402.

The protein belongs to the EPSP synthase family. Monomer.

The protein localises to the cytoplasm. It catalyses the reaction 3-phosphoshikimate + phosphoenolpyruvate = 5-O-(1-carboxyvinyl)-3-phosphoshikimate + phosphate. The protein operates within metabolic intermediate biosynthesis; chorismate biosynthesis; chorismate from D-erythrose 4-phosphate and phosphoenolpyruvate: step 6/7. Functionally, catalyzes the transfer of the enolpyruvyl moiety of phosphoenolpyruvate (PEP) to the 5-hydroxyl of shikimate-3-phosphate (S3P) to produce enolpyruvyl shikimate-3-phosphate and inorganic phosphate. The chain is 3-phosphoshikimate 1-carboxyvinyltransferase from Bradyrhizobium sp. (strain ORS 278).